Consider the following 504-residue polypeptide: ATP synthase subunit alpha (504 aa).

171 to 178 (GDRQTGKT) is an ATP binding site.

The protein belongs to the ATPase alpha/beta chains family. In terms of assembly, F-type ATPases have 2 components, CF(1) - the catalytic core - and CF(0) - the membrane proton channel. CF(1) has five subunits: alpha(3), beta(3), gamma(1), delta(1), epsilon(1). CF(0) has three main subunits: a(1), b(2) and c(9-12). The alpha and beta chains form an alternating ring which encloses part of the gamma chain. CF(1) is attached to CF(0) by a central stalk formed by the gamma and epsilon chains, while a peripheral stalk is formed by the delta and b chains.

Its subcellular location is the cell inner membrane. The enzyme catalyses ATP + H2O + 4 H(+)(in) = ADP + phosphate + 5 H(+)(out). Its function is as follows. Produces ATP from ADP in the presence of a proton gradient across the membrane. The alpha chain is a regulatory subunit. This chain is ATP synthase subunit alpha, found in Sulfurovum sp. (strain NBC37-1).